The following is a 335-amino-acid chain: Malate dehydrogenase 1 (335 aa).

NAD(+) contacts are provided by residues 11–16 (GAGNVG) and Asp-35. Substrate contacts are provided by Arg-97 and Arg-103. Residues Asn-110 and 133–135 (VTN) contribute to the NAD(+) site. 2 residues coordinate substrate: Asn-135 and Arg-166. His-190 acts as the Proton acceptor in catalysis.

The protein belongs to the LDH/MDH superfamily. MDH type 3 family.

The catalysed reaction is (S)-malate + NAD(+) = oxaloacetate + NADH + H(+). Its function is as follows. Catalyzes the reversible oxidation of malate to oxaloacetate. The polypeptide is Malate dehydrogenase 1 (mdh1) (Aquifex aeolicus (strain VF5)).